A 129-amino-acid chain; its full sequence is MAKSVRSSKKKVKRVVTDAVAHIYSSFNNTIVTITDRQGNALSWATSGGSGFRGSRKSTPFAAQVAAERAADMALEYGVKNVDVLVKGPGSGRDSAVRALNAKNLKVTSITDVTPLPHNGCRPPKKRRV.

Belongs to the universal ribosomal protein uS11 family. As to quaternary structure, part of the 30S ribosomal subunit. Interacts with proteins S7 and S18. Binds to IF-3.

Located on the platform of the 30S subunit, it bridges several disparate RNA helices of the 16S rRNA. Forms part of the Shine-Dalgarno cleft in the 70S ribosome. The polypeptide is Small ribosomal subunit protein uS11 (Francisella tularensis subsp. tularensis (strain FSC 198)).